The chain runs to 155 residues: Transcriptional repressor NrdR (155 aa).

A zinc finger spans residues 3–34 (CPFCHAEETKVVDSRLVADGAQVRRRRECLEC). The ATP-cone domain occupies 49–139 (PLIIKRDGRR…VYKRFKDVSD (91 aa)).

This sequence belongs to the NrdR family. Zn(2+) is required as a cofactor.

In terms of biological role, negatively regulates transcription of bacterial ribonucleotide reductase nrd genes and operons by binding to NrdR-boxes. The protein is Transcriptional repressor NrdR of Legionella pneumophila (strain Lens).